A 38-amino-acid polypeptide reads, in one-letter code: Large ribosomal subunit protein bL36 (38 aa).

It belongs to the bacterial ribosomal protein bL36 family.

The protein is Large ribosomal subunit protein bL36 of Karelsulcia muelleri (strain GWSS) (Sulcia muelleri).